The sequence spans 260 residues: Cytochrome c oxidase subunit 3 (260 aa).

A run of 6 helical transmembrane segments spans residues 41 to 61 (LTLV…RDII), 81 to 101 (GMIL…WAFF), 133 to 153 (TGVL…ILAG), 161 to 181 (ALFL…WEYI), 196 to 216 (FFVA…FLMV), and 238 to 258 (AWYW…IYWW).

Belongs to the cytochrome c oxidase subunit 3 family. As to quaternary structure, component of the cytochrome c oxidase (complex IV, CIV), a multisubunit enzyme composed of a catalytic core of 3 subunits and several supernumerary subunits. The complex exists as a monomer or a dimer and forms supercomplexes (SCs) in the inner mitochondrial membrane with ubiquinol-cytochrome c oxidoreductase (cytochrome b-c1 complex, complex III, CIII).

It localises to the mitochondrion inner membrane. The catalysed reaction is 4 Fe(II)-[cytochrome c] + O2 + 8 H(+)(in) = 4 Fe(III)-[cytochrome c] + 2 H2O + 4 H(+)(out). In terms of biological role, component of the cytochrome c oxidase, the last enzyme in the mitochondrial electron transport chain which drives oxidative phosphorylation. The respiratory chain contains 3 multisubunit complexes succinate dehydrogenase (complex II, CII), ubiquinol-cytochrome c oxidoreductase (cytochrome b-c1 complex, complex III, CIII) and cytochrome c oxidase (complex IV, CIV), that cooperate to transfer electrons derived from NADH and succinate to molecular oxygen, creating an electrochemical gradient over the inner membrane that drives transmembrane transport and the ATP synthase. Cytochrome c oxidase is the component of the respiratory chain that catalyzes the reduction of oxygen to water. Electrons originating from reduced cytochrome c in the intermembrane space (IMS) are transferred via the dinuclear copper A center (CU(A)) of subunit 2 and heme A of subunit 1 to the active site in subunit 1, a binuclear center (BNC) formed by heme A3 and copper B (CU(B)). The BNC reduces molecular oxygen to 2 water molecules using 4 electrons from cytochrome c in the IMS and 4 protons from the mitochondrial matrix. This is Cytochrome c oxidase subunit 3 (COIII) from Strongylocentrotus purpuratus (Purple sea urchin).